Reading from the N-terminus, the 226-residue chain is Neuron-specific vesicular protein calcyon (226 aa).

The tract at residues 1-23 is disordered; sequence MVKLGCSFSGKPGKETGDQDGAA. Over 1–88 the chain is Extracellular; that stretch reads MVKLGCSFSG…EEGRRLPTAR (88 aa). The helical transmembrane segment at 89–109 threads the bilayer; the sequence is MIAFAMALLGCVLIMYKAIWY. The Cytoplasmic segment spans residues 110 to 226; sequence DQFTCPDGFL…AEDVPSQSPK (117 aa). The disordered stretch occupies residues 189–226; it reads TAAAAAAAEGNEPSGKPLDMREKEDPQKAEDVPSQSPK. The span at 206 to 219 shows a compositional bias: basic and acidic residues; it reads LDMREKEDPQKAED.

Belongs to the NSG family. In terms of assembly, interacts with CLTA. Expressed exclusively in neurons (at protein level). In all age groups, expressed at significantly higher levels in the medial prefrontal and orbital frontal cortices of spontaneously hypertensive rats (SHR), a model of attention deficit-hyperactivity disorder, than Wistar Kyoto (WKY) animals. In the motor cortex, dorsal striatum and nucleus accumbens, expression is significantly elevated in SHR only in younger animals.

Its subcellular location is the cytoplasmic vesicle membrane. It is found in the cell membrane. In terms of biological role, interacts with clathrin light chain A and stimulates clathrin self-assembly and clathrin-mediated endocytosis. The chain is Neuron-specific vesicular protein calcyon (Caly) from Rattus norvegicus (Rat).